Consider the following 401-residue polypeptide: Voltage-gated potassium channel subunit beta-3 (401 aa).

2 stretches are compositionally biased toward polar residues: residues 1-14 (MQVS…TLRS) and 32-41 (GVSMAQTKQR). The segment at 1–49 (MQVSFACTEQTLRSRTSEDRLCPSRPSGGQNGVSMAQTKQRTPPMGAKN) is disordered. Positions 90, 91, 97, and 119 each coordinate NADP(+). Residue Tyr124 is the Proton donor/acceptor of the active site. NADP(+)-binding residues include Asn192, Ser222, Arg223, Gln248, Trp277, Ser278, Pro279, Leu280, Ala281, Cys282, Lys288, Arg298, Gly357, Ser359, Gln363, Glu366, and Asn367.

It belongs to the shaker potassium channel beta subunit family. Forms heteromultimeric complex with alpha subunits. Identified in potassium channel complexes containing KCNA1 and KCNA2.

It localises to the cytoplasm. Its function is as follows. Regulatory subunit of the voltage-gated potassium (Kv) channels composed of pore-forming and potassium-conducting alpha subunits and of regulatory beta subunit. The beta-3/KCNAB3 subunit may mediate closure of potassium channels. Increases and accelerates inactivation of Kv1.1/KCNA1 and Kv2.2/KCNA2 subunit-containing channels. May display nicotinamide adenine dinucleotide phosphate (NADPH)-dependent aldoketoreductase activity. The binding of oxidized and reduced NADP(H) cofactors may be required for the regulation of potassium channel activity. In Xenopus laevis (African clawed frog), this protein is Voltage-gated potassium channel subunit beta-3 (kcnab3).